The following is a 130-amino-acid chain: Small ribosomal subunit protein uS9 (130 aa).

Residues 98 to 130 (LKRAGLLTRDPRMKERKKPGLKKARRSPQFSKR) form a disordered region. Basic residues predominate over residues 111–130 (KERKKPGLKKARRSPQFSKR).

The protein belongs to the universal ribosomal protein uS9 family.

The chain is Small ribosomal subunit protein uS9 from Staphylococcus saprophyticus subsp. saprophyticus (strain ATCC 15305 / DSM 20229 / NCIMB 8711 / NCTC 7292 / S-41).